Here is an 889-residue protein sequence, read N- to C-terminus: DNA mismatch repair protein MutS (889 aa).

Residue 641-648 coordinates ATP; the sequence is GPNMAGKS.

It belongs to the DNA mismatch repair MutS family.

This protein is involved in the repair of mismatches in DNA. It is possible that it carries out the mismatch recognition step. This protein has a weak ATPase activity. In Orientia tsutsugamushi (strain Ikeda) (Rickettsia tsutsugamushi), this protein is DNA mismatch repair protein MutS.